The chain runs to 377 residues: Guanine nucleotide-binding protein subunit alpha-13 (377 aa).

Residues C14 and C18 are each lipidated (S-palmitoyl cysteine). A G-alpha domain is found at 47–377 (RLVKILLLGA…HDNLKQLMLQ (331 aa)). The G1 motif stretch occupies residues 50–63 (KILLLGAGESGKST). Residues 58–63 (ESGKST), S173, and 197–200 (LLAR) each bind GTP. A Mg(2+)-binding site is contributed by S62. The G2 motif stretch occupies residues 195–203 (DILLARRPT). T203 contributes to the Mg(2+) binding site. Phosphothreonine; by PKA is present on T203. Positions 218-227 (FKMVDVGGQR) are G3 motif. The segment at 287–294 (ILFLNKTD) is G4 motif. GTP-binding positions include 291–294 (NKTD) and A349. Residues 347–352 (TTAINT) form a G5 motif region.

This sequence belongs to the G-alpha family. G(12) subfamily. In terms of assembly, g proteins are composed of 3 units; alpha, beta and gamma. The alpha chain contains the guanine nucleotide binding site. Interacts with UBXD5. Interacts with HAX1. Interacts (in GTP-bound form) with PPP5C (via TPR repeats); activates PPP5C phosphatase activity and translocates PPP5C to the cell membrane. Interacts with RGS22. Interacts (in GTP-bound form) with ARHGEF1. Interacts (in GTP-bound form) with ARHGEF11 (via RGS domain). Interacts (in GTP-bound form) with ARHGEF12 (via RGS domain). Interacts with CTNND1. Interacts with GASL2L2. Interacts with GPR35. Interacts with GPR174. In terms of processing, palmitoylation is critical for proper membrane localization and signaling. Phosphorylation on Thr-203 by PKA destabilizes the heterotrimer of alpha, beta and gamma, and inhibits Rho activation. Expressed in testis, including in Leydig cells and in the seminiferous epithelium, in differentiating cells from the spermatogonia to mature spermatozoa stages and round spermatids (at protein level). Expressed in 99.2% of spermatozoa from healthy individuals, but only in 28.6% of macrocephalic spermatozoa from infertile patients (at protein level).

It is found in the cell membrane. The protein resides in the melanosome. The protein localises to the cytoplasm. Its subcellular location is the nucleus. In terms of biological role, guanine nucleotide-binding proteins (G proteins) are involved as modulators or transducers in various transmembrane signaling systems. Activates effector molecule RhoA by binding and activating RhoGEFs (ARHGEF1/p115RhoGEF, ARHGEF11/PDZ-RhoGEF and ARHGEF12/LARG). GNA13-dependent Rho signaling subsequently regulates transcription factor AP-1 (activating protein-1). Promotes tumor cell invasion and metastasis by activating RhoA/ROCK signaling pathway. Inhibits CDH1-mediated cell adhesion in a process independent from Rho activation. In lymphoid follicles, transmits P2RY8- and S1PR2-dependent signals that lead to inhibition of germinal center (GC) B cell growth and migration outside the GC niche. In Homo sapiens (Human), this protein is Guanine nucleotide-binding protein subunit alpha-13 (GNA13).